Consider the following 159-residue polypeptide: Endoribonuclease YbeY (159 aa).

Zn(2+) is bound by residues H125, H129, and H135.

This sequence belongs to the endoribonuclease YbeY family. Zn(2+) serves as cofactor.

The protein resides in the cytoplasm. Its function is as follows. Single strand-specific metallo-endoribonuclease involved in late-stage 70S ribosome quality control and in maturation of the 3' terminus of the 16S rRNA. The chain is Endoribonuclease YbeY from Limosilactobacillus reuteri (strain DSM 20016) (Lactobacillus reuteri).